Reading from the N-terminus, the 189-residue chain is Interferon alpha-7 (189 aa).

The signal sequence occupies residues 1-23 (MARSFSLLMVVLVLSYKSICSLG). Disulfide bonds link C24-C122 and C52-C162.

This sequence belongs to the alpha/beta interferon family.

It localises to the secreted. In terms of biological role, produced by macrophages, IFN-alpha have antiviral activities. Interferon stimulates the production of two enzymes: a protein kinase and an oligoadenylate synthetase. The sequence is that of Interferon alpha-7 (IFNA7) from Homo sapiens (Human).